Consider the following 493-residue polypeptide: Glutamyl-tRNA(Gln) amidotransferase subunit A (493 aa).

Catalysis depends on charge relay system residues Lys78 and Ser158. Ser182 serves as the catalytic Acyl-ester intermediate.

It belongs to the amidase family. GatA subfamily. As to quaternary structure, heterotrimer of A, B and C subunits.

The enzyme catalyses L-glutamyl-tRNA(Gln) + L-glutamine + ATP + H2O = L-glutaminyl-tRNA(Gln) + L-glutamate + ADP + phosphate + H(+). Functionally, allows the formation of correctly charged Gln-tRNA(Gln) through the transamidation of misacylated Glu-tRNA(Gln) in organisms which lack glutaminyl-tRNA synthetase. The reaction takes place in the presence of glutamine and ATP through an activated gamma-phospho-Glu-tRNA(Gln). This Rickettsia bellii (strain OSU 85-389) protein is Glutamyl-tRNA(Gln) amidotransferase subunit A.